The sequence spans 295 residues: Protoheme IX farnesyltransferase (295 aa).

9 consecutive transmembrane segments (helical) span residues 31-51, 54-74, 98-118, 121-141, 147-167, 173-193, 220-240, 245-265, and 273-293; these read GLVM…IGAA, VLTV…NCYL, FVAL…LSLA, GLTA…YTPM, TALF…WTSV, AGGL…FLAI, LWMA…VPLG, GYAI…ISGI, and ARTF…ALFL.

It belongs to the UbiA prenyltransferase family. Protoheme IX farnesyltransferase subfamily.

The protein localises to the cell inner membrane. It catalyses the reaction heme b + (2E,6E)-farnesyl diphosphate + H2O = Fe(II)-heme o + diphosphate. Its pathway is porphyrin-containing compound metabolism; heme O biosynthesis; heme O from protoheme: step 1/1. Functionally, converts heme B (protoheme IX) to heme O by substitution of the vinyl group on carbon 2 of heme B porphyrin ring with a hydroxyethyl farnesyl side group. This chain is Protoheme IX farnesyltransferase, found in Anaeromyxobacter dehalogenans (strain 2CP-C).